The primary structure comprises 769 residues: MALRPQRTFRRRQVESSDSDSDSDGAKEQSAEEPASAGGRTEGAERPRGARSARGRGRVWASSRRSPGAAPRGDGGAECRTAELSTDEEEGTHTLTGSKGDRSPSSDSSCSLEERDVSPIVEIPDAAFIQAARRKRELARTPGDYISLDVNHSCSTSDCKRSNEEDPESDPDDHEKRILFTPKPQTLRQRMAEETSIRSEESSEESQEDENQDIWEQQQMRKAVRIPAGQNTDLSHSSKSQTLKKFDTSISFPPVNLEIIKKQLNNRLTLLQESHRSHQREYEKYEQDIKSSKTAIQNLESASDHAQNYRFYRGMKSYVENIIDCLNEKIVSIVELESSMYTLLLKRSEALLKRRQDELKCESSYLQQLSRKDETSANGSLAVDEKDQRILEEIEARRMQRRQARELSGSCDHQEGMSSDDELSPAEMTNFHKCQGDILQDCKKVFEDVHDDFCNVQNILLKFQQWREKFPDSYYEAFVGFCLPKLLSPLIRVQLLDWNPLKMDSIGLDKMPWFTAITEFMESSMDDIGKEDGSDKKILAAVINKTVVPRLTDFVETIWDPLSTSQTRSLTVHCRVAFEQFASENEVSKNKQDLLKSIVARMKKSIEDDIFIPLYPKSSEEGKMSPHSKFQERQFWGALKLFRNILLWNGLLPDDTLQDLGLGKLLNRYLIISLTNAVPGPDVVKKCSQIAACLPERWFENSAMRTSIPQLENFIKFLLQSAQKLSSSEFRNEVSEIILILVKVKALTQAESLREERPLEPLPAQSTGV.

Disordered stretches follow at residues 1–122 (MALR…PIVE) and 134–212 (RKRE…DENQ). Phosphoserine is present on residues serine 16, serine 17, serine 19, and serine 85. Threonine 86 carries the phosphothreonine modification. Phosphoserine is present on residues serine 118 and serine 169. The span at 190–201 (RMAEETSIRSEE) shows a compositional bias: basic and acidic residues. Positions 202–212 (SSEESQEDENQ) are enriched in acidic residues. Residues serine 203 and serine 206 each carry the phosphoserine modification. Residues 256-308 (NLEIIKKQLNNRLTLLQESHRSHQREYEKYEQDIKSSKTAIQNLESASDHAQN) adopt a coiled-coil conformation.

The protein belongs to the GCF family. In terms of assembly, found in the Intron Large (IL) complex, a post-mRNA release spliceosomal complex containing the excised intron, U2, U5 and U6 snRNPs, and splicing factors. Interacts with TFIP11 and DHX15.

It localises to the nucleus. Its subcellular location is the nucleoplasm. The protein localises to the nucleolus. Functionally, involved in pre-mRNA splicing through regulating spliceosome C complex formation. May play a role during late-stage splicing events and turnover of excised introns. In Mus musculus (Mouse), this protein is Intron Large complex component GCFC2 (Gcfc2).